The following is a 216-amino-acid chain: MRLGILGGTFNPIHNAHLRIAEEARDLYQLDRVVFIPAATPPHKPLVGELSFASRLEMVRLAVADNPGFMVSDMEGVRGGRSYSIDTLRELKARYPDDDLFFIVGADSFNDISTWREYEAIFELCNVISVQRPGSTITSLAEALPVAIAGEFCYDPAAKRLNHCSGHAVYALDGVLLDISSSHIRLSVQGGRSIRYLLPDAVEHYIKEQRLYVDAR.

This sequence belongs to the NadD family.

The enzyme catalyses nicotinate beta-D-ribonucleotide + ATP + H(+) = deamido-NAD(+) + diphosphate. It functions in the pathway cofactor biosynthesis; NAD(+) biosynthesis; deamido-NAD(+) from nicotinate D-ribonucleotide: step 1/1. Catalyzes the reversible adenylation of nicotinate mononucleotide (NaMN) to nicotinic acid adenine dinucleotide (NaAD). The protein is Probable nicotinate-nucleotide adenylyltransferase of Citrifermentans bemidjiense (strain ATCC BAA-1014 / DSM 16622 / JCM 12645 / Bem) (Geobacter bemidjiensis).